Consider the following 215-residue polypeptide: 3-demethoxyubiquinol 3-hydroxylase (215 aa).

Residues Glu64, Glu94, His97, Glu146, Glu178, and His181 each coordinate Fe cation.

This sequence belongs to the COQ7 family. Requires Fe cation as cofactor.

It localises to the cell membrane. The enzyme catalyses a 5-methoxy-2-methyl-3-(all-trans-polyprenyl)benzene-1,4-diol + AH2 + O2 = a 3-demethylubiquinol + A + H2O. Its pathway is cofactor biosynthesis; ubiquinone biosynthesis. Functionally, catalyzes the hydroxylation of 2-nonaprenyl-3-methyl-6-methoxy-1,4-benzoquinol during ubiquinone biosynthesis. In Bordetella avium (strain 197N), this protein is 3-demethoxyubiquinol 3-hydroxylase.